The sequence spans 387 residues: Protein kinase gsk3 (387 aa).

In terms of domain architecture, Protein kinase spans 32–316 (YTSSKVVGSG…AAEAMCHPFF (285 aa)). Residues 38–46 (VGSGSFGVV) and Lys-61 each bind ATP. Catalysis depends on Asp-157, which acts as the Proton acceptor. Ser-191 carries the phosphoserine modification. Tyr-192 is modified (phosphotyrosine; by autocatalysis). Ser-335 is modified (phosphoserine).

The protein belongs to the protein kinase superfamily. CMGC Ser/Thr protein kinase family. GSK-3 subfamily. In terms of processing, autophosphorylated on tyrosine residues.

Its subcellular location is the cytoplasm. It is found in the nucleus. It catalyses the reaction L-seryl-[protein] + ATP = O-phospho-L-seryl-[protein] + ADP + H(+). It carries out the reaction L-threonyl-[protein] + ATP = O-phospho-L-threonyl-[protein] + ADP + H(+). Interacts with cdc14 which is thought to play a role in the initiation and completion of mitosis. Involved in the positive regulation of mis12. The sequence is that of Protein kinase gsk3 (gsk3) from Schizosaccharomyces pombe (strain 972 / ATCC 24843) (Fission yeast).